The sequence spans 445 residues: C4-dicarboxylate transport protein (445 aa).

Transmembrane regions (helical) follow at residues Val-24–Pro-44, Leu-62–Ile-82, Phe-105–Ala-125, Gly-163–Gly-183, Phe-201–Phe-221, Leu-234–Gly-254, Ile-322–Gly-342, and Ala-370–Ile-390.

Belongs to the dicarboxylate/amino acid:cation symporter (DAACS) (TC 2.A.23) family.

It is found in the cell inner membrane. In terms of biological role, responsible for the transport of dicarboxylates such as succinate, fumarate, and malate from the periplasm across the membrane. This Rhodopseudomonas palustris (strain ATCC BAA-98 / CGA009) protein is C4-dicarboxylate transport protein.